We begin with the raw amino-acid sequence, 406 residues long: Multifunctional CCA protein (406 aa).

Positions 8 and 11 each coordinate ATP. G8 and R11 together coordinate CTP. Residues D21 and D23 each coordinate Mg(2+). ATP contacts are provided by R91, R137, and R140. CTP contacts are provided by R91, R137, and R140. The region spanning 228-329 is the HD domain; sequence TGIHTLMVAQ…IKILNKFDVW (102 aa).

The protein belongs to the tRNA nucleotidyltransferase/poly(A) polymerase family. Bacterial CCA-adding enzyme type 1 subfamily. As to quaternary structure, monomer. Can also form homodimers and oligomers. It depends on Mg(2+) as a cofactor. Ni(2+) serves as cofactor.

The catalysed reaction is a tRNA precursor + 2 CTP + ATP = a tRNA with a 3' CCA end + 3 diphosphate. It carries out the reaction a tRNA with a 3' CCA end + 2 CTP + ATP = a tRNA with a 3' CCACCA end + 3 diphosphate. Functionally, catalyzes the addition and repair of the essential 3'-terminal CCA sequence in tRNAs without using a nucleic acid template. Adds these three nucleotides in the order of C, C, and A to the tRNA nucleotide-73, using CTP and ATP as substrates and producing inorganic pyrophosphate. tRNA 3'-terminal CCA addition is required both for tRNA processing and repair. Also involved in tRNA surveillance by mediating tandem CCA addition to generate a CCACCA at the 3' terminus of unstable tRNAs. While stable tRNAs receive only 3'-terminal CCA, unstable tRNAs are marked with CCACCA and rapidly degraded. This Vibrio campbellii (strain ATCC BAA-1116) protein is Multifunctional CCA protein.